Here is an 849-residue protein sequence, read N- to C-terminus: Autoinducer 1 sensor kinase/phosphatase LuxN (849 aa).

Helical transmembrane passes span Ile9–Phe29, Val41–Ile61, Ser160–Met180, Ile196–Phe216, Phe220–Leu242, Tyr251–Ile275, and Trp283–Tyr301. One can recognise a Histidine kinase domain in the interval Ser468 to Pro683. Residue His471 is modified to Phosphohistidine; by autocatalysis. In terms of domain architecture, Response regulatory spans Thr722 to Leu835. Position 771 is a 4-aspartylphosphate (Asp771).

Its subcellular location is the cell inner membrane. The enzyme catalyses ATP + protein L-histidine = ADP + protein N-phospho-L-histidine.. In terms of biological role, at low cell density, in the absence of AI-1 (autoinducer 1), LuxN has a kinase activity and autophosphorylates on His-471. The phosphoryl group is then transferred on Asp-771 of the response regulator domain. The phosphoryl group is transferred to LuxU, and ultimately to LuxO. At high cell density, in the presence of AI-1, the kinase activity is inactivated, and the response regulator domain has a phosphatase activity. LuxN phosphatase acts on itself. As LuxU could function to establish an equilibrium between the aspartyl-phosphate of LuxN and the aspartyl-phosphate of LuxO, LuxU transfers phosphate from LuxO to LuxN and finally phosphate is drained from the system. The chain is Autoinducer 1 sensor kinase/phosphatase LuxN (luxN) from Vibrio harveyi (Beneckea harveyi).